Reading from the N-terminus, the 347-residue chain is Phenylalanine--tRNA ligase alpha subunit (347 aa).

Mg(2+) is bound at residue Glu-261.

This sequence belongs to the class-II aminoacyl-tRNA synthetase family. Phe-tRNA synthetase alpha subunit type 1 subfamily. As to quaternary structure, tetramer of two alpha and two beta subunits. The cofactor is Mg(2+).

The protein localises to the cytoplasm. It catalyses the reaction tRNA(Phe) + L-phenylalanine + ATP = L-phenylalanyl-tRNA(Phe) + AMP + diphosphate + H(+). In Streptococcus uberis (strain ATCC BAA-854 / 0140J), this protein is Phenylalanine--tRNA ligase alpha subunit.